Here is a 242-residue protein sequence, read N- to C-terminus: ATP synthase subunit a (242 aa).

6 consecutive transmembrane segments (helical) span residues 29-49 (SSIYMLLASILALTYFYLAFY), 84-104 (FIPLVFSLFIFILFCNLLGMT), 114-134 (IIVTFTLAILVFLTVTIVGFV), 140-160 (FLTLFLPHGTPLWLAPLMIVI), 189-209 (VIAGFTVSLMIYLKFLPIPLM), and 210-230 (MILIGFEIFVAILQAYIFTIL).

It belongs to the ATPase A chain family. As to quaternary structure, F-type ATPases have 2 components, CF(1) - the catalytic core - and CF(0) - the membrane proton channel. CF(1) has five subunits: alpha(3), beta(3), gamma(1), delta(1), epsilon(1). CF(0) has three main subunits: a(1), b(2) and c(9-12). The alpha and beta chains form an alternating ring which encloses part of the gamma chain. CF(1) is attached to CF(0) by a central stalk formed by the gamma and epsilon chains, while a peripheral stalk is formed by the delta and b chains.

It is found in the cell inner membrane. Functionally, key component of the proton channel; it plays a direct role in the translocation of protons across the membrane. The polypeptide is ATP synthase subunit a (Rickettsia massiliae (strain Mtu5)).